The chain runs to 916 residues: Alanine--tRNA ligase (916 aa).

Residues histidine 611, histidine 615, cysteine 714, and histidine 718 each coordinate Zn(2+).

The protein belongs to the class-II aminoacyl-tRNA synthetase family. The cofactor is Zn(2+).

It localises to the cytoplasm. It catalyses the reaction tRNA(Ala) + L-alanine + ATP = L-alanyl-tRNA(Ala) + AMP + diphosphate. Its function is as follows. Catalyzes the attachment of alanine to tRNA(Ala) in a two-step reaction: alanine is first activated by ATP to form Ala-AMP and then transferred to the acceptor end of tRNA(Ala). Also edits incorrectly charged Ser-tRNA(Ala) and Gly-tRNA(Ala) via its editing domain. This is Alanine--tRNA ligase from Methanospirillum hungatei JF-1 (strain ATCC 27890 / DSM 864 / NBRC 100397 / JF-1).